The sequence spans 1909 residues: DENN domain-containing protein 4C (1909 aa).

The MABP domain occupies 40–199; the sequence is KAPITDIAII…SVFLCYKKSV (160 aa). The region spanning 191–364 is the uDENN domain; that stretch reads VFLCYKKSVP…NIPFPSPQRP (174 aa). The region spanning 385 to 521 is the cDENN domain; the sequence is PLPLSGANFS…PCKNLLSTLK (137 aa). Residues 523–641 form the dDENN domain; sequence LYPQLSSVHQ…CSFVSDKDTG (119 aa). Ser-703, Ser-737, and Ser-741 each carry phosphoserine. The stretch at 821–855 is one PPR repeat; that stretch reads VCYRVVMQLCGLWGHPVLAVRVLFEMKTARIKPNA. Glu-953, Ser-965, Ser-968, and Ser-973 each carry phosphoserine. Position 975 is a phosphothreonine (Thr-975). 12 positions are modified to phosphoserine: Ser-989, Ser-996, Ser-1003, Ser-1046, Ser-1061, Ser-1099, Ser-1126, Ser-1184, Ser-1225, Ser-1244, Ser-1252, and Ser-1278. Disordered regions lie at residues 1243–1263 and 1277–1338; these read KSPL…NRES and SSLP…HGSL. The span at 1296–1316 shows a compositional bias: polar residues; the sequence is SSPAVSRSKTFTGRFKQQTPS. 3 positions are modified to phosphoserine: Ser-1325, Ser-1337, and Ser-1346. The disordered stretch occupies residues 1419–1474; sequence SGLVPSELTQSNTSLGSSSSSGDVGKLHYPTGEVPFPRGMKGQDFEKSDHGSSQNT. The span at 1426–1440 shows a compositional bias: low complexity; it reads LTQSNTSLGSSSSSG. The segment covering 1459–1468 has biased composition (basic and acidic residues); the sequence is KGQDFEKSDH. 5 positions are modified to phosphoserine: Ser-1623, Ser-1627, Ser-1629, Ser-1640, and Ser-1799.

Phosphorylated in response to insulin.

It is found in the cytoplasmic vesicle membrane. It localises to the cell membrane. The protein localises to the cytoplasm. The protein resides in the cytosol. Its function is as follows. Guanine nucleotide exchange factor (GEF) activating RAB10. Promotes the exchange of GDP to GTP, converting inactive GDP-bound RAB10 into its active GTP-bound form. Thereby, stimulates SLC2A4/GLUT4 glucose transporter-enriched vesicles delivery to the plasma membrane in response to insulin. This Homo sapiens (Human) protein is DENN domain-containing protein 4C (DENND4C).